A 292-amino-acid polypeptide reads, in one-letter code: Acetyl-coenzyme A carboxylase carboxyl transferase subunit beta (292 aa).

In terms of domain architecture, CoA carboxyltransferase N-terminal spans 29–292; sequence LWVKCSECGQ…HGVKELVQTN (264 aa). The Zn(2+) site is built by Cys33, Cys36, Cys52, and Cys55. The C4-type zinc-finger motif lies at 33–55; it reads CSECGQVAYRKDLISNFNVCSNC.

Belongs to the AccD/PCCB family. Acetyl-CoA carboxylase is a heterohexamer composed of biotin carboxyl carrier protein (AccB), biotin carboxylase (AccC) and two subunits each of ACCase subunit alpha (AccA) and ACCase subunit beta (AccD). It depends on Zn(2+) as a cofactor.

It is found in the cytoplasm. It catalyses the reaction N(6)-carboxybiotinyl-L-lysyl-[protein] + acetyl-CoA = N(6)-biotinyl-L-lysyl-[protein] + malonyl-CoA. It participates in lipid metabolism; malonyl-CoA biosynthesis; malonyl-CoA from acetyl-CoA: step 1/1. Its function is as follows. Component of the acetyl coenzyme A carboxylase (ACC) complex. Biotin carboxylase (BC) catalyzes the carboxylation of biotin on its carrier protein (BCCP) and then the CO(2) group is transferred by the transcarboxylase to acetyl-CoA to form malonyl-CoA. This is Acetyl-coenzyme A carboxylase carboxyl transferase subunit beta from Prochlorococcus marinus subsp. pastoris (strain CCMP1986 / NIES-2087 / MED4).